Reading from the N-terminus, the 734-residue chain is Photosystem I P700 chlorophyll a apoprotein A2 (734 aa).

8 consecutive transmembrane segments (helical) span residues 46 to 69 (IFASHFGQLAIIFLWTSGNLFHVA), 135 to 158 (LYTGAIFLLILSTISLIAGWLHLQ), 175 to 199 (LNHHLSGLFGVSSLAWTGHLVHVAI), 273 to 291 (IAHHHLAIAFIFLVAGHMY), 330 to 353 (IHFQLGLALASLGVITSLVAQHMY), 369 to 395 (AALYTHHQYIAGFIMTGAFAHGAIFFI), 417 to 439 (AIISHLSWASLFLGFHTLGLYVH), and 517 to 535 (FLVHHAIALGLHTTTLILV). [4Fe-4S] cluster contacts are provided by Cys559 and Cys568. A run of 2 helical transmembrane segments spans residues 575–596 (AFYLAVFWMLNTIGWVTFYWHW) and 643–665 (LSVWAWMFLFGHLVWATGFMFLI). Chlorophyll a is bound by residues His654, Met662, and Tyr670. Trp671 provides a ligand contact to phylloquinone. Residues 707-727 (LVGLAHFSVGYIFTYAAFLIA) traverse the membrane as a helical segment.

This sequence belongs to the PsaA/PsaB family. In terms of assembly, the PsaA/B heterodimer binds the P700 chlorophyll special pair and subsequent electron acceptors. PSI consists of a core antenna complex that captures photons, and an electron transfer chain that converts photonic excitation into a charge separation. The eukaryotic PSI reaction center is composed of at least 11 subunits. Requires P700 is a chlorophyll a/chlorophyll a' dimer, A0 is one or more chlorophyll a, A1 is one or both phylloquinones and FX is a shared 4Fe-4S iron-sulfur center. as cofactor.

The protein localises to the plastid. It localises to the chloroplast thylakoid membrane. The enzyme catalyses reduced [plastocyanin] + hnu + oxidized [2Fe-2S]-[ferredoxin] = oxidized [plastocyanin] + reduced [2Fe-2S]-[ferredoxin]. Its function is as follows. PsaA and PsaB bind P700, the primary electron donor of photosystem I (PSI), as well as the electron acceptors A0, A1 and FX. PSI is a plastocyanin-ferredoxin oxidoreductase, converting photonic excitation into a charge separation, which transfers an electron from the donor P700 chlorophyll pair to the spectroscopically characterized acceptors A0, A1, FX, FA and FB in turn. Oxidized P700 is reduced on the lumenal side of the thylakoid membrane by plastocyanin. The polypeptide is Photosystem I P700 chlorophyll a apoprotein A2 (Phaseolus vulgaris (Kidney bean)).